A 132-amino-acid chain; its full sequence is Holo-[acyl-carrier-protein] synthase (132 aa).

Residues aspartate 8 and glutamate 64 each contribute to the Mg(2+) site.

It belongs to the P-Pant transferase superfamily. AcpS family. The cofactor is Mg(2+).

The protein resides in the cytoplasm. It carries out the reaction apo-[ACP] + CoA = holo-[ACP] + adenosine 3',5'-bisphosphate + H(+). Its function is as follows. Transfers the 4'-phosphopantetheine moiety from coenzyme A to a Ser of acyl-carrier-protein. This is Holo-[acyl-carrier-protein] synthase from Shewanella sediminis (strain HAW-EB3).